The chain runs to 155 residues: Endoribonuclease YbeY (155 aa).

Zn(2+) contacts are provided by H114, H118, and H124.

This sequence belongs to the endoribonuclease YbeY family. It depends on Zn(2+) as a cofactor.

The protein resides in the cytoplasm. Single strand-specific metallo-endoribonuclease involved in late-stage 70S ribosome quality control and in maturation of the 3' terminus of the 16S rRNA. This chain is Endoribonuclease YbeY, found in Proteus mirabilis (strain HI4320).